We begin with the raw amino-acid sequence, 83 residues long: Mu-theraphotoxin-Hhn2f (83 aa).

A signal peptide spans 1-21; it reads MKASMFLALAGLVLLFVVGYA. Residues 22–48 constitute a propeptide that is removed on maturation; that stretch reads SESEEKEFPIELLSKIFAVDVFKGEER. 3 disulfide bridges follow: cysteine 50–cysteine 65, cysteine 57–cysteine 70, and cysteine 64–cysteine 77. Leucine 81 is subject to Leucine amide.

This sequence belongs to the neurotoxin 10 (Hwtx-1) family. 15 (Hntx-3) subfamily. Monomer. Expressed by the venom gland.

The protein localises to the secreted. In terms of biological role, lethal neurotoxin. Selectively blocks tetrodotoxin-sensitive voltage-gated sodium channels (Nav). Does not affect tetrodotoxin-resistant voltage-gated sodium channels or calcium channels. This chain is Mu-theraphotoxin-Hhn2f, found in Cyriopagopus hainanus (Chinese bird spider).